The primary structure comprises 141 residues: Putative pre-16S rRNA nuclease (141 aa).

Belongs to the YqgF nuclease family.

The protein localises to the cytoplasm. Functionally, could be a nuclease involved in processing of the 5'-end of pre-16S rRNA. The sequence is that of Putative pre-16S rRNA nuclease from Amoebophilus asiaticus (strain 5a2).